A 363-amino-acid chain; its full sequence is Alanine racemase (363 aa).

The active-site Proton acceptor; specific for D-alanine is lysine 34. At lysine 34 the chain carries N6-(pyridoxal phosphate)lysine. Residue arginine 129 coordinates substrate. The Proton acceptor; specific for L-alanine role is filled by tyrosine 256. Methionine 304 provides a ligand contact to substrate.

Belongs to the alanine racemase family. Requires pyridoxal 5'-phosphate as cofactor.

The catalysed reaction is L-alanine = D-alanine. It participates in amino-acid biosynthesis; D-alanine biosynthesis; D-alanine from L-alanine: step 1/1. Its function is as follows. Catalyzes the interconversion of L-alanine and D-alanine. May also act on other amino acids. The sequence is that of Alanine racemase (alr) from Edwardsiella ictaluri (strain 93-146).